The sequence spans 224 residues: MSNTLVIKITGKLFDTNASLIKKYVEIFKDLSGKYKLAIITGGGGLARKYIGYAREIGVSSNYWLDMIGIRSAQLNAYLLISSLYPKAYPEPVNNLEELLRIMNNYEIAVLGGLIPGQSTSSVALEVAEALGVSKVIDYSAIDKVYDKDPLKYPDAKPYDKISIAKLREILRQKQLPGEYALIDLRALDIAERSKITIIITHYKKPNTIYDILRGENPGTIIYP.

Position 8–12 (8–12 (KITGK)) interacts with ATP. Gly43 lines the UMP pocket. ATP contacts are provided by Gly44 and Arg48. UMP is bound by residues Asp66 and 114 to 120 (LIPGQST). 3 residues coordinate ATP: Ser140, Tyr146, and Asp149.

It belongs to the UMP kinase family. As to quaternary structure, homohexamer.

It is found in the cytoplasm. The enzyme catalyses UMP + ATP = UDP + ADP. Its pathway is pyrimidine metabolism; CTP biosynthesis via de novo pathway; UDP from UMP (UMPK route): step 1/1. Inhibited by UTP. Catalyzes the reversible phosphorylation of UMP to UDP. This Staphylothermus marinus (strain ATCC 43588 / DSM 3639 / JCM 9404 / F1) protein is Uridylate kinase.